The primary structure comprises 92 residues: LYR motif-containing protein 4 homolog (92 aa).

The stretch at 40 to 68 (ANKAIRDFAEIDRQMEAGKQNLELIRRQV) forms a coiled coil.

The protein belongs to the complex I LYR family. As to quaternary structure, component of the mitochondrial core iron-sulfur cluster (ISC) assembly complex at least composed of the cysteine desulfurase Nfs1, the scaffold protein IscU, the accessory protein bcn92/Isd11/Lyrm4, and probably fh/frataxin. Interacts with Nfs1.

Its subcellular location is the mitochondrion. Functionally, stabilizing factor of the core iron-sulfur cluster (ISC) assembly complex that regulates the stability and cysteine desulfurase activity of Nfs1 and participates in the [2Fe-2S] clusters assembly on the scaffolding protein IscU. This chain is LYR motif-containing protein 4 homolog, found in Drosophila subobscura (Fruit fly).